The sequence spans 165 residues: UPF0763 protein NIS_0363 (165 aa).

The protein belongs to the UPF0763 family.

This Nitratiruptor sp. (strain SB155-2) protein is UPF0763 protein NIS_0363.